A 137-amino-acid polypeptide reads, in one-letter code: uncharacterized protein (137 aa).

Residues 31 to 83 (PASPINDKEKDKAGGRLPSGSEPRARAFCEAGADGEQGDPSPADTIKANQGHI) form a disordered region.

This is an uncharacterized protein from Homo sapiens (Human).